A 468-amino-acid polypeptide reads, in one-letter code: 6-phosphogluconate dehydrogenase, decarboxylating (468 aa).

Residues G10–G15, N33–T35, V74–S76, and N102 each bind NADP(+). Substrate contacts are provided by residues N102 and S128–G130. K182 (proton acceptor) is an active-site residue. H185–N186 contacts substrate. Residue E189 is the Proton donor of the active site. 5 residues coordinate substrate: Y190, K259, R286, R445, and H451.

This sequence belongs to the 6-phosphogluconate dehydrogenase family. As to quaternary structure, homodimer.

The catalysed reaction is 6-phospho-D-gluconate + NADP(+) = D-ribulose 5-phosphate + CO2 + NADPH. It participates in carbohydrate degradation; pentose phosphate pathway; D-ribulose 5-phosphate from D-glucose 6-phosphate (oxidative stage): step 3/3. Functionally, catalyzes the oxidative decarboxylation of 6-phosphogluconate to ribulose 5-phosphate and CO(2), with concomitant reduction of NADP to NADPH. The polypeptide is 6-phosphogluconate dehydrogenase, decarboxylating (gnd) (Buchnera aphidicola subsp. Acyrthosiphon pisum (strain APS) (Acyrthosiphon pisum symbiotic bacterium)).